The following is a 279-amino-acid chain: Fatty acid desaturase 4-like 2, chloroplastic (279 aa).

The transit peptide at 1–30 (MATSLQTKYTLNPITNNIPRSHRPSFLRVT) directs the protein to the chloroplast. Transmembrane regions (helical) follow at residues 68–90 (LWVA…GAFG), 98–118 (SLAG…YHWA), and 178–198 (VVHG…LFHA).

This sequence belongs to the fatty acid desaturase CarF family.

The protein resides in the plastid. It localises to the chloroplast membrane. It functions in the pathway lipid metabolism; fatty acid metabolism. Fatty acid desaturase involved in the production of chloroplast-specific phosphatidylglycerol molecular species. Catalyzes the formation of a trans double bond introduced close to the carboxyl group of palmitic acid, which is specifically esterified to the sn-2 glyceryl carbon of phosphatidylglycerol. The polypeptide is Fatty acid desaturase 4-like 2, chloroplastic (FAD4L2) (Arabidopsis thaliana (Mouse-ear cress)).